Reading from the N-terminus, the 253-residue chain is DNA repair protein RecO (253 aa).

It belongs to the RecO family.

Its function is as follows. Involved in DNA repair and RecF pathway recombination. This is DNA repair protein RecO from Dehalococcoides mccartyi (strain ATCC BAA-2266 / KCTC 15142 / 195) (Dehalococcoides ethenogenes (strain 195)).